Consider the following 273-residue polypeptide: Orotidine 5'-phosphate decarboxylase (273 aa).

K97 functions as the Proton donor in the catalytic mechanism.

The protein belongs to the OMP decarboxylase family. Type 2 subfamily.

It catalyses the reaction orotidine 5'-phosphate + H(+) = UMP + CO2. It functions in the pathway pyrimidine metabolism; UMP biosynthesis via de novo pathway; UMP from orotate: step 2/2. This Cellvibrio japonicus (strain Ueda107) (Pseudomonas fluorescens subsp. cellulosa) protein is Orotidine 5'-phosphate decarboxylase.